Consider the following 565-residue polypeptide: CTP synthase (565 aa).

An amidoligase domain region spans residues 1–272 (MARPKNVKHI…DKRVLKKLGI (272 aa)). A CTP-binding site is contributed by serine 18. UTP is bound at residue serine 18. Residue 19-24 (SLGKGI) participates in ATP binding. Residue tyrosine 59 participates in L-glutamine binding. Aspartate 76 contributes to the ATP binding site. Mg(2+) is bound by residues aspartate 76 and glutamate 146. CTP is bound by residues 153–155 (DIE), 193–198 (KTKPTQ), and lysine 229. UTP contacts are provided by residues 193 to 198 (KTKPTQ) and lysine 229. Positions 299–543 (TIAVCGKYTE…VAAAKAFAFG (245 aa)) constitute a Glutamine amidotransferase type-1 domain. Residue glycine 363 participates in L-glutamine binding. The active-site Nucleophile; for glutamine hydrolysis is cysteine 390. L-glutamine is bound by residues 391–394 (LGMQ), glutamate 414, and arginine 471. Residues histidine 516 and glutamate 518 contribute to the active site.

It belongs to the CTP synthase family. As to quaternary structure, homotetramer.

The catalysed reaction is UTP + L-glutamine + ATP + H2O = CTP + L-glutamate + ADP + phosphate + 2 H(+). It catalyses the reaction L-glutamine + H2O = L-glutamate + NH4(+). It carries out the reaction UTP + NH4(+) + ATP = CTP + ADP + phosphate + 2 H(+). Its pathway is pyrimidine metabolism; CTP biosynthesis via de novo pathway; CTP from UDP: step 2/2. Its activity is regulated as follows. Allosterically activated by GTP, when glutamine is the substrate; GTP has no effect on the reaction when ammonia is the substrate. The allosteric effector GTP functions by stabilizing the protein conformation that binds the tetrahedral intermediate(s) formed during glutamine hydrolysis. Inhibited by the product CTP, via allosteric rather than competitive inhibition. In terms of biological role, catalyzes the ATP-dependent amination of UTP to CTP with either L-glutamine or ammonia as the source of nitrogen. Regulates intracellular CTP levels through interactions with the four ribonucleotide triphosphates. This chain is CTP synthase, found in Chlorobium phaeobacteroides (strain BS1).